The sequence spans 91 residues: Small ribosomal subunit protein uS15 (91 aa).

This sequence belongs to the universal ribosomal protein uS15 family. As to quaternary structure, part of the 30S ribosomal subunit. Forms a bridge to the 50S subunit in the 70S ribosome, contacting the 23S rRNA.

One of the primary rRNA binding proteins, it binds directly to 16S rRNA where it helps nucleate assembly of the platform of the 30S subunit by binding and bridging several RNA helices of the 16S rRNA. Functionally, forms an intersubunit bridge (bridge B4) with the 23S rRNA of the 50S subunit in the ribosome. The polypeptide is Small ribosomal subunit protein uS15 (Rickettsia prowazekii (strain Madrid E)).